The primary structure comprises 293 residues: Histamine N-methyltransferase B (293 aa).

E28 is a substrate binding site. S-adenosyl-L-methionine-binding residues include G60, E89, Q94, S120, and I142. A substrate-binding site is contributed by N283.

This sequence belongs to the class I-like SAM-binding methyltransferase superfamily. HNMT family. Monomer.

Its subcellular location is the cytoplasm. The enzyme catalyses histamine + S-adenosyl-L-methionine = N(tau)-methylhistamine + S-adenosyl-L-homocysteine + H(+). In terms of biological role, inactivates histamine by N-methylation. Plays an important role in degrading histamine and in regulating the airway response to histamine. This chain is Histamine N-methyltransferase B (hnmt-b), found in Xenopus laevis (African clawed frog).